Reading from the N-terminus, the 61-residue chain is Large ribosomal subunit protein eL24 (61 aa).

Zn(2+) contacts are provided by C7, C10, C33, and C37. The C4-type zinc finger occupies 7-37 (CSFCGHEIPPGTGLMYVRNDGTILWFCSSKC).

This sequence belongs to the eukaryotic ribosomal protein eL24 family. In terms of assembly, part of the 50S ribosomal subunit. Forms a cluster with proteins L3 and L14. Zn(2+) serves as cofactor.

Binds to the 23S rRNA. The polypeptide is Large ribosomal subunit protein eL24 (Saccharolobus islandicus (strain Y.N.15.51 / Yellowstone #2) (Sulfolobus islandicus)).